The chain runs to 120 residues: Ribonuclease P protein component (120 aa).

This sequence belongs to the RnpA family. As to quaternary structure, consists of a catalytic RNA component (M1 or rnpB) and a protein subunit.

It carries out the reaction Endonucleolytic cleavage of RNA, removing 5'-extranucleotides from tRNA precursor.. RNaseP catalyzes the removal of the 5'-leader sequence from pre-tRNA to produce the mature 5'-terminus. It can also cleave other RNA substrates such as 4.5S RNA. The protein component plays an auxiliary but essential role in vivo by binding to the 5'-leader sequence and broadening the substrate specificity of the ribozyme. The polypeptide is Ribonuclease P protein component (Dehalococcoides mccartyi (strain CBDB1)).